A 369-amino-acid chain; its full sequence is Flagellar P-ring protein (369 aa).

An N-terminal signal peptide occupies residues 1 to 22 (MIKLKQLIAATLLLSAAFGAHA).

This sequence belongs to the FlgI family. The basal body constitutes a major portion of the flagellar organelle and consists of four rings (L,P,S, and M) mounted on a central rod.

It is found in the periplasm. It localises to the bacterial flagellum basal body. In terms of biological role, assembles around the rod to form the L-ring and probably protects the motor/basal body from shearing forces during rotation. The protein is Flagellar P-ring protein of Pseudomonas syringae pv. tomato (strain ATCC BAA-871 / DC3000).